Here is a 181-residue protein sequence, read N- to C-terminus: Ribulose bisphosphate carboxylase small subunit, chloroplastic (181 aa).

Residues methionine 1 to glutamine 56 constitute a chloroplast transit peptide.

It belongs to the RuBisCO small chain family. As to quaternary structure, heterohexadecamer of 8 large and 8 small subunits.

The protein resides in the plastid. Its subcellular location is the chloroplast. Functionally, ruBisCO catalyzes two reactions: the carboxylation of D-ribulose 1,5-bisphosphate, the primary event in carbon dioxide fixation, as well as the oxidative fragmentation of the pentose substrate. Both reactions occur simultaneously and in competition at the same active site. Although the small subunit is not catalytic it is essential for maximal activity. The sequence is that of Ribulose bisphosphate carboxylase small subunit, chloroplastic from Lactuca sativa (Garden lettuce).